Here is a 943-residue protein sequence, read N- to C-terminus: Isoleucine--tRNA ligase (943 aa).

A 'HIGH' region motif is present at residues 59–69; sequence PYANGQIHLGH. Glu-577 is an L-isoleucyl-5'-AMP binding site. A 'KMSKS' region motif is present at residues 618-622; that stretch reads KMSKS. Position 621 (Lys-621) interacts with ATP. Zn(2+) is bound by residues Cys-906, Cys-909, Cys-926, and Cys-929.

This sequence belongs to the class-I aminoacyl-tRNA synthetase family. IleS type 1 subfamily. Monomer. Requires Zn(2+) as cofactor.

It localises to the cytoplasm. It carries out the reaction tRNA(Ile) + L-isoleucine + ATP = L-isoleucyl-tRNA(Ile) + AMP + diphosphate. In terms of biological role, catalyzes the attachment of isoleucine to tRNA(Ile). As IleRS can inadvertently accommodate and process structurally similar amino acids such as valine, to avoid such errors it has two additional distinct tRNA(Ile)-dependent editing activities. One activity is designated as 'pretransfer' editing and involves the hydrolysis of activated Val-AMP. The other activity is designated 'posttransfer' editing and involves deacylation of mischarged Val-tRNA(Ile). This is Isoleucine--tRNA ligase from Xylella fastidiosa (strain 9a5c).